Here is a 169-residue protein sequence, read N- to C-terminus: Putative phosphoesterase SSP1770 (169 aa).

H34 (proton donor) is an active-site residue. 2 short sequence motifs (HXTX) span residues 34 to 37 (HITI) and 115 to 118 (HFTI). The active-site Proton acceptor is the H115.

The protein belongs to the 2H phosphoesterase superfamily. YjcG family.

This chain is Putative phosphoesterase SSP1770, found in Staphylococcus saprophyticus subsp. saprophyticus (strain ATCC 15305 / DSM 20229 / NCIMB 8711 / NCTC 7292 / S-41).